The primary structure comprises 629 residues: Phosphoglucomutase, chloroplastic (629 aa).

The transit peptide at 1-69 directs the protein to the chloroplast; the sequence is MSSTYARFDT…SSSSGPIIAG (69 aa). Alpha-D-glucose 1,6-bisphosphate is bound by residues Arg94 and Ser187. Residue Ser187 is the Phosphoserine intermediate of the active site. The Mg(2+) site is built by Ser187, Asp352, Asp354, and Asp356. At Ser187 the chain carries Phosphoserine. Alpha-D-glucose 1,6-bisphosphate is bound by residues Asp356, Arg357, Thr420, Glu439, Ser441, and Lys452.

The protein belongs to the phosphohexose mutase family. Monomer. Requires Mg(2+) as cofactor.

It is found in the plastid. Its subcellular location is the chloroplast. The enzyme catalyses alpha-D-glucose 1-phosphate = alpha-D-glucose 6-phosphate. It carries out the reaction O-phospho-L-seryl-[protein] + alpha-D-glucose 1-phosphate = alpha-D-glucose 1,6-bisphosphate + L-seryl-[protein]. It catalyses the reaction alpha-D-glucose 1,6-bisphosphate + L-seryl-[protein] = O-phospho-L-seryl-[protein] + alpha-D-glucose 6-phosphate. With respect to regulation, inhibited by the Calvin cycle intermediates fructose-1,6-bisphosphate and ribulose-1,5-bisphosphate. Functionally, catalyzes the reversible isomerization of alpha-D-glucose 1-phosphate to alpha-D-glucose 6-phosphate. The mechanism proceeds via the intermediate compound alpha-D-glucose 1,6-bisphosphate. This enzyme participates in both the breakdown and synthesis of glucose. The sequence is that of Phosphoglucomutase, chloroplastic (PGMP) from Brassica napus (Rape).